The sequence spans 361 residues: Peptide chain release factor 1 (361 aa).

Residue Q236 is modified to N5-methylglutamine. Basic and acidic residues predominate over residues 285-309; it reads TAKDSARAADRKAQVGSGDRSERIR. The disordered stretch occupies residues 285 to 313; it reads TAKDSARAADRKAQVGSGDRSERIRTYNF.

It belongs to the prokaryotic/mitochondrial release factor family. Post-translationally, methylated by PrmC. Methylation increases the termination efficiency of RF1.

The protein localises to the cytoplasm. Functionally, peptide chain release factor 1 directs the termination of translation in response to the peptide chain termination codons UAG and UAA. This Methylorubrum populi (strain ATCC BAA-705 / NCIMB 13946 / BJ001) (Methylobacterium populi) protein is Peptide chain release factor 1.